The following is a 188-amino-acid chain: Glandular kallikrein-3, submandibular (188 aa).

In terms of domain architecture, Peptidase S1 spans 1 to 185 (NYHVLLGQNN…FTSWIKEVMK (185 aa)). 2 N-linked (GlcNAc...) asparagine glycosylation sites follow: Asn10 and Asn36. Asp47 acts as the Charge relay system in catalysis. Disulfide bonds link Cys79–Cys146, Cys111–Cys125, and Cys136–Cys161. The active-site Charge relay system is Ser140.

Belongs to the peptidase S1 family. Kallikrein subfamily.

The enzyme catalyses Preferential cleavage of Arg-|-Xaa bonds in small molecule substrates. Highly selective action to release kallidin (lysyl-bradykinin) from kininogen involves hydrolysis of Met-|-Xaa or Leu-|-Xaa.. Glandular kallikreins cleave Met-Lys and Arg-Ser bonds in kininogen to release Lys-bradykinin. This Rattus norvegicus (Rat) protein is Glandular kallikrein-3, submandibular (Klk3).